The chain runs to 355 residues: Aurora kinase (355 aa).

The 252-residue stretch at 89–340 (FEIGKPLGKG…LEQVMRHPWI (252 aa)) folds into the Protein kinase domain. Residues 95–103 (LGKGKFGRV) and Lys-118 each bind ATP. Catalysis depends on Asp-212, which acts as the Proton acceptor.

The protein belongs to the protein kinase superfamily. Ser/Thr protein kinase family. Aurora subfamily. As to quaternary structure, component of the CPC complex at least composed of ark1, bir1 and pic1. Interacts with the mitotic checkpoint complex (MCC) subunit mad3.

It localises to the nucleus. The protein resides in the cytoplasm. It is found in the cytoskeleton. Its subcellular location is the spindle. The catalysed reaction is L-seryl-[protein] + ATP = O-phospho-L-seryl-[protein] + ADP + H(+). It catalyses the reaction L-threonyl-[protein] + ATP = O-phospho-L-threonyl-[protein] + ADP + H(+). Component of the chromosomal passenger complex (CPC), a complex that acts as a key regulator of chromosome segregation and cytokinesis. Has a role in error-correction of aberrent kinetochore-microtubule attachments to ensure that sister kinetochores become bioriented and connect to opposite poles by promoting spindle assembly checkpoint signaling. Ark1 is also required for phosphorylation of histone H3 that accompanies chromosome condensation and condensin recruitment to mitotic chromatin. In Schizosaccharomyces pombe (strain 972 / ATCC 24843) (Fission yeast), this protein is Aurora kinase (ark1).